The sequence spans 353 residues: Basic membrane protein C (353 aa).

The N-terminal stretch at 1 to 16 (MFKRFIFITLSLLVFA) is a signal peptide. Cys-17 is lipidated: N-palmitoyl cysteine. A lipid anchor (S-diacylglycerol cysteine) is attached at Cys-17.

This sequence belongs to the BMP lipoprotein family. Monomer.

It localises to the cell inner membrane. May be part of an ABC-type nucleoside uptake system involved in the purine salvage pathway. This is Basic membrane protein C (bmpC) from Borreliella burgdorferi (strain N40) (Borrelia burgdorferi).